The sequence spans 1073 residues: Carbamoyl phosphate synthase large chain (1073 aa).

The tract at residues 1 to 403 (MPKRTDIKSI…SLQKALRGLE (403 aa)) is carboxyphosphate synthetic domain. ATP is bound by residues R129, R169, G175, G176, E208, L210, E215, G241, V242, H243, Q285, and E299. The 196-residue stretch at 133–328 (DKAMKSIGLA…IARVAAKLAV (196 aa)) folds into the ATP-grasp 1 domain. Q285, E299, and N301 together coordinate Mg(2+). Residues Q285, E299, and N301 each contribute to the Mn(2+) site. Residues 404–553 (VGVCGLDPKL…YSTYEEECEA (150 aa)) are oligomerization domain. The carbamoyl phosphate synthetic domain stretch occupies residues 554-935 (NPSTRDKIMI…AFAKAQMGAS (382 aa)). In terms of domain architecture, ATP-grasp 2 spans 678–869 (QQMVERLNLR…LAMIAARVMA (192 aa)). Residues R714, H753, L755, E760, G785, V786, H787, S788, Q828, and E840 each contribute to the ATP site. Mg(2+) contacts are provided by Q828, E840, and N842. Mn(2+)-binding residues include Q828, E840, and N842. Residues 936 to 1073 (EVLPTGGTAF…LQDLHAGLKA (138 aa)) form the MGS-like domain. The segment at 936–1073 (EVLPTGGTAF…LQDLHAGLKA (138 aa)) is allosteric domain.

Belongs to the CarB family. As to quaternary structure, composed of two chains; the small (or glutamine) chain promotes the hydrolysis of glutamine to ammonia, which is used by the large (or ammonia) chain to synthesize carbamoyl phosphate. Tetramer of heterodimers (alpha,beta)4. Mg(2+) serves as cofactor. Requires Mn(2+) as cofactor.

The enzyme catalyses hydrogencarbonate + L-glutamine + 2 ATP + H2O = carbamoyl phosphate + L-glutamate + 2 ADP + phosphate + 2 H(+). The catalysed reaction is hydrogencarbonate + NH4(+) + 2 ATP = carbamoyl phosphate + 2 ADP + phosphate + 2 H(+). Its pathway is amino-acid biosynthesis; L-arginine biosynthesis; carbamoyl phosphate from bicarbonate: step 1/1. The protein operates within pyrimidine metabolism; UMP biosynthesis via de novo pathway; (S)-dihydroorotate from bicarbonate: step 1/3. Large subunit of the glutamine-dependent carbamoyl phosphate synthetase (CPSase). CPSase catalyzes the formation of carbamoyl phosphate from the ammonia moiety of glutamine, carbonate, and phosphate donated by ATP, constituting the first step of 2 biosynthetic pathways, one leading to arginine and/or urea and the other to pyrimidine nucleotides. The large subunit (synthetase) binds the substrates ammonia (free or transferred from glutamine from the small subunit), hydrogencarbonate and ATP and carries out an ATP-coupled ligase reaction, activating hydrogencarbonate by forming carboxy phosphate which reacts with ammonia to form carbamoyl phosphate. This is Carbamoyl phosphate synthase large chain from Pseudomonas syringae pv. tomato (strain ATCC BAA-871 / DC3000).